The primary structure comprises 334 residues: Putative B3 domain-containing protein At3g49610 (334 aa).

Disordered stretches follow at residues glutamate 69 to lysine 89 and aspartate 133 to proline 178. Composition is skewed to polar residues over residues leucine 73–phenylalanine 84 and lysine 141–methionine 157. Over residues lysine 161–lysine 173 the composition is skewed to basic residues. Positions phenylalanine 229 to glutamate 334 form a DNA-binding region, TF-B3.

The protein localises to the nucleus. In Arabidopsis thaliana (Mouse-ear cress), this protein is Putative B3 domain-containing protein At3g49610.